The chain runs to 477 residues: Alanine--glyoxylate aminotransferase 2 homolog 2, mitochondrial (477 aa).

A mitochondrion-targeting transit peptide spans Met1–Ile22. Residues Gly165–Thr166, Tyr192, and Asp292–Gln295 contribute to the pyridoxal 5'-phosphate site. At Lys321 the chain carries N6-(pyridoxal phosphate)lysine. Thr350 contributes to the pyridoxal 5'-phosphate binding site.

It belongs to the class-III pyridoxal-phosphate-dependent aminotransferase family. Homotetramer. Interacts with GRF3. The cofactor is pyridoxal 5'-phosphate.

Its subcellular location is the mitochondrion. The enzyme catalyses glyoxylate + L-alanine = glycine + pyruvate. This chain is Alanine--glyoxylate aminotransferase 2 homolog 2, mitochondrial (AGT3), found in Arabidopsis thaliana (Mouse-ear cress).